We begin with the raw amino-acid sequence, 577 residues long: External alternative NAD(P)H-ubiquinone oxidoreductase B1, mitochondrial (577 aa).

Residues 1 to 35 (MRGFTYLSKVLHSHSSYSKLLVLCSVSTGGLLVYA) constitute a mitochondrion transit peptide. FAD is bound at residue 57 to 87 (RVVVLGTGWGGTSFLKDVDISSYDVQVVSPR). Residue 221-257 (LHFVIVGGGPTGVEFAAELHDYVYEDLVKIYPSVKDF) coordinates NAD(+). One can recognise an EF-hand domain in the interval 378–413 (KVMEDISAIFKAADKDDSGTLSIEEFRDVLEDIIIR). Positions 391, 393, 395, 397, and 402 each coordinate Ca(2+). The short motif at 568–577 (YIFGRDSSRI) is the Microbody targeting signal element.

Belongs to the NADH dehydrogenase family. Requires FAD as cofactor.

Its subcellular location is the mitochondrion inner membrane. It is found in the peroxisome. It carries out the reaction a quinone + NADH + H(+) = a quinol + NAD(+). The enzyme catalyses a ubiquinone + NADH + H(+) = a ubiquinol + NAD(+). Its activity is regulated as follows. Activity is calcium-dependent with a more pronounced effect at higher pH. In terms of biological role, alternative NADH-ubiquinone oxidoreductase which catalyzes the oxidation of mitochondrial NADH does not translocate protons across the inner mitochondrial membrane. Calcium-dependent NAD(P)H dehydrogenase. Binds calcium ions. This is External alternative NAD(P)H-ubiquinone oxidoreductase B1, mitochondrial (NDB1) from Solanum tuberosum (Potato).